Reading from the N-terminus, the 444-residue chain is Pentatricopeptide repeat-containing protein At4g35850, mitochondrial (444 aa).

The transit peptide at methionine 1 to phenylalanine 25 directs the protein to the mitochondrion. PPR repeat units follow at residues aspartate 40 to proline 74, threonine 75 to proline 109, aspartate 110 to proline 144, asparagine 145 to leucine 179, asparagine 255 to threonine 289, and aspartate 290 to alanine 325.

It belongs to the PPR family. P subfamily.

The protein resides in the mitochondrion. The polypeptide is Pentatricopeptide repeat-containing protein At4g35850, mitochondrial (Arabidopsis thaliana (Mouse-ear cress)).